The following is a 1434-amino-acid chain: Probable deoxyribonuclease RhsA (1434 aa).

Positions 14–42 (AMHAGNRPNPPDDRPQPCRGKPPTSPGKT) are disordered. The next 2 membrane-spanning stretches (helical) occupy residues 48 to 68 (FLGALAGAVAGALVAAAVAAA) and 70 to 90 (VFLVGVTGGLAVAAVGALAVF). YD repeat units lie at residues 486-521 (YDAAHRLTRWHDNDQTWARYEYDAQGRCVYTTCADG), 592-628 (DDTGRVSTFTDASGHQWQYDYDAAQRLCGVTDPLGRE), and 847-876 (YDARGLLLRETAPDDTLHYRYDAVGRLTEV).

This sequence belongs to the RHS/WapA nuclease family.

It is found in the membrane. Functionally, toxic component of a toxin-immunity protein module, which functions as a cellular contact-dependent growth inhibition (CDI) system. This protein may be a nuclease that is specifically inhibited by its cognate immunity protein RhsAI. Upon expression of the C-terminus (residues 1284-1434) in E.coli growth is inhibited, cells elongate, nucleoids condense and plasmid DNA is degraded; these effects are blocked specifically by cognate immunity protein RshIA. Cell contact is necessary for growth inhibition. In Dickeya dadantii (strain 3937) (Erwinia chrysanthemi (strain 3937)), this protein is Probable deoxyribonuclease RhsA (rhsA).